Consider the following 582-residue polypeptide: Hemagglutinin-neuraminidase (582 aa).

Topologically, residues 1–34 (MEPSKLFTMSDNATFAPGPVVNAADKKTFRTCFR) are intravirion. The helical transmembrane segment at 35-55 (ILVLSVQAVTLILVIVTLGEL) threads the bilayer. Residues 56 to 582 (VRMINDQGLS…LPVLTRLTIT (527 aa)) are Virion surface-facing. 3 disulfides stabilise this stretch: Cys178/Cys202, Cys192/Cys253, and Cys244/Cys257. 2 N-linked (GlcNAc...) asparagine; by host glycosylation sites follow: Asn284 and Asn329. 3 disulfides stabilise this stretch: Cys350–Cys471, Cys382–Cys392, and Cys465–Cys475. Residues Asn400 and Asn448 are each glycosylated (N-linked (GlcNAc...) asparagine; by host). Residue Asn507 is glycosylated (N-linked (GlcNAc...) asparagine; by host). Cys545 and Cys556 form a disulfide bridge.

It belongs to the paramyxoviruses hemagglutinin-neuraminidase family. As to quaternary structure, homotetramer; composed of disulfide-linked homodimers. Interacts with F protein trimer.

It is found in the virion membrane. The protein localises to the host cell membrane. The enzyme catalyses Hydrolysis of alpha-(2-&gt;3)-, alpha-(2-&gt;6)-, alpha-(2-&gt;8)- glycosidic linkages of terminal sialic acid residues in oligosaccharides, glycoproteins, glycolipids, colominic acid and synthetic substrates.. Functionally, attaches the virus to alpha-2,3-linked sialic acid-containing cell receptors and thereby initiating infection. Binding of HN protein to the receptor induces a conformational change that allows the F protein to trigger virion/cell membranes fusion. Binds to the glycan motifs sialyl Lewis (SLe) and GM2 ganglioside (GM2-glycan). In terms of biological role, neuraminidase activity ensures the efficient spread of the virus by dissociating the mature virions from the neuraminic acid containing glycoproteins. The chain is Hemagglutinin-neuraminidase from Mumps orthorubulavirus (MuV).